Reading from the N-terminus, the 514-residue chain is Cytochrome P450 87A3 (514 aa).

A run of 2 helical transmembrane segments spans residues 36-56 (ASSM…VALL) and 315-335 (LMFV…TIGV). Residue cysteine 463 participates in heme binding.

The protein belongs to the cytochrome P450 family. Requires heme as cofactor. Expressed in roots and coleoptiles, but not in leaves.

Its subcellular location is the cytoplasmic vesicle membrane. In Oryza sativa subsp. japonica (Rice), this protein is Cytochrome P450 87A3 (CYP87A3).